The chain runs to 143 residues: uncharacterized protein (143 aa).

Residue cysteine 12 is part of the active site.

This sequence belongs to the ArsC family.

This is an uncharacterized protein from Rhodospirillum rubrum.